The sequence spans 350 residues: dTDP-D-glucose 4,6-dehydratase (350 aa).

Substrate is bound at residue T142. D143 serves as the catalytic Proton donor. Residues E144 and Y166 each act as proton acceptor in the active site.

This sequence belongs to the NAD(P)-dependent epimerase/dehydratase family. dTDP-glucose dehydratase subfamily. NAD(+) serves as cofactor.

It carries out the reaction dTDP-alpha-D-glucose = dTDP-4-dehydro-6-deoxy-alpha-D-glucose + H2O. In Homo sapiens (Human), this protein is dTDP-D-glucose 4,6-dehydratase (TGDS).